The chain runs to 425 residues: Protein translocase subunit SecY (425 aa).

Helical transmembrane passes span 15–35 (LLSL…VPGI), 62–82 (TVVV…SIIM), 113–131 (LLTL…FYLK), 139–159 (LVLA…VLWL), 168–188 (LGNG…PGFV), 201–221 (IGSW…IVLL), 266–286 (PIIL…LGLL), 304–324 (IIYW…YSTI), 364–384 (LLGA…QAIL), and 385–405 (SLSG…GVIL).

This sequence belongs to the SecY/SEC61-alpha family. Component of the plastid Sec protein translocase complex, which is composed of at least SecY, SecE and SecG.

Its subcellular location is the plastid. It localises to the chloroplast thylakoid membrane. The central subunit of the protein translocation channel SecYE. Consists of two halves formed by TMs 1-5 and 6-10. These two domains form a lateral gate at the front which open onto the bilayer between TMs 2 and 7, and are clamped together by SecE at the back. The channel is closed by both a pore ring composed of hydrophobic SecY resides and a short helix (helix 2A) on the extracellular side of the membrane which forms a plug. This is Protein translocase subunit SecY from Trieres chinensis (Marine centric diatom).